The following is a 753-amino-acid chain: Probable phosphoenolpyruvate synthase (753 aa).

H398 functions as the Tele-phosphohistidine intermediate in the catalytic mechanism. Substrate contacts are provided by R488, R535, E631, G653, T654, N655, and D656. E631 contributes to the Mg(2+) binding site. D656 provides a ligand contact to Mg(2+). C703 functions as the Proton donor in the catalytic mechanism.

It belongs to the PEP-utilizing enzyme family. Mg(2+) is required as a cofactor.

It catalyses the reaction pyruvate + ATP + H2O = phosphoenolpyruvate + AMP + phosphate + 2 H(+). It functions in the pathway carbohydrate biosynthesis; gluconeogenesis. Its function is as follows. Catalyzes the phosphorylation of pyruvate to phosphoenolpyruvate. The chain is Probable phosphoenolpyruvate synthase (ppsA) from Archaeoglobus fulgidus (strain ATCC 49558 / DSM 4304 / JCM 9628 / NBRC 100126 / VC-16).